Here is a 487-residue protein sequence, read N- to C-terminus: 6-phosphogluconate dehydrogenase, decarboxylating 3, chloroplastic (487 aa).

Residue Met-1 is modified to N-acetylmethionine. Residues 13 to 18 (GLAVMG), 36 to 38 (NRT), 80 to 82 (VKA), and Asn-108 contribute to the NADP(+) site. Substrate-binding positions include Asn-108 and 134–136 (SGG). Lys-188 serves as the catalytic Proton acceptor. 191 to 192 (HN) lines the substrate pocket. Glu-195 (proton donor) is an active-site residue. Tyr-196, Lys-266, Arg-293, Arg-458, and His-464 together coordinate substrate.

It belongs to the 6-phosphogluconate dehydrogenase family. As to quaternary structure, forms homodimer. Forms heterodimers with PGD1 or PGD2.

Its subcellular location is the plastid. It localises to the chloroplast. The protein localises to the cytoplasm. It is found in the cytosol. The enzyme catalyses 6-phospho-D-gluconate + NADP(+) = D-ribulose 5-phosphate + CO2 + NADPH. It functions in the pathway carbohydrate degradation; pentose phosphate pathway; D-ribulose 5-phosphate from D-glucose 6-phosphate (oxidative stage): step 3/3. Its function is as follows. Catalyzes the oxidative decarboxylation of 6-phosphogluconate to ribulose 5-phosphate and CO(2), with concomitant reduction of NADP to NADPH. This Arabidopsis thaliana (Mouse-ear cress) protein is 6-phosphogluconate dehydrogenase, decarboxylating 3, chloroplastic.